The chain runs to 55 residues: Lantibiotic epilancin 15X (55 aa).

Residues 1–24 (MKKELFDLNLNKDIEAQKSDLNPQ) constitute a propeptide, cleaved by ElxP. Position 25 is a D-lactate; by the dehydratase ElxB and the dehydrogenase ElxO (S25). A 2,3-didehydroalanine (Ser); by the dehydratase ElxB modification is found at S27. 2,3-didehydrobutyrine; by the dehydratase ElxB occurs at positions 31 and 32. The lanthionine (Ser-Cys); by the dehydratase ElxB and the cyclase ElxC cross-link spans 36–40 (SKKLC). 2 consecutive cross-links (beta-methyllanthionine (Thr-Cys); by the dehydratase ElxB and the cyclase ElxC) follow at residues 44-47 (TLTC) and 46-49 (TCGC). 2,3-didehydrobutyrine; by the dehydratase ElxB is present on T52.

Post-translationally, maturation of this lantibiotic involves the enzymatic conversion of Thr, and Ser into dehydrated AA by ElxB and the formation of thioether bonds with cysteine by the cyclase ElxC. The next steps are cleavage of the leader peptide by ElxP and membrane translocation by ElxT. The leader peptide may be removed before membrane translocation, in contrast to other lantibiotics for which the cleavage occur after translocation. This is suggested by the probable cytoplasmic localization of the serine protease ElxP that cleaves the leader peptide. In terms of processing, the N-terminal D-lactate is probably produced by dehydration of Ser-25 by ElxB, followed by proteolytic removal of the leader peptide by the serine protease ElxP and hydrolysis of the resulting new N-terminal dehydroalanine. This hydrolysis may occur spontaneously. The pyruvate group thus formed is reduced to D-lactate by the NADPH-dependent oxidoreductase ElxO. This N-terminal D-lactate protects the lantibiotic against degradation against aminopeptidase. It is not established whether the 2,3-didehydrobutyrines are the E- or Z-isomers.

Lanthionine-containing peptide antibiotic (lantibiotic) active on Gram-positive bacteria such as staphylococci, enterococci and streptococci. The bactericidal activity of lantibiotics is based on depolarization of energized bacterial cytoplasmic membranes, initiated by the formation of aqueous transmembrane pores. This chain is Lantibiotic epilancin 15X, found in Staphylococcus epidermidis.